The chain runs to 43 residues: uncharacterized protein (43 aa).

This is an uncharacterized protein from Sinorhizobium fredii (strain NBRC 101917 / NGR234).